Here is a 480-residue protein sequence, read N- to C-terminus: Protein nucleotidyltransferase YdiU (480 aa).

The ATP site is built by Gly-86, Gly-88, Arg-89, Lys-109, Asp-121, Gly-122, Arg-172, and Arg-179. Asp-248 serves as the catalytic Proton acceptor. Mg(2+) is bound by residues Asn-249 and Asp-258. Asp-258 contacts ATP.

Belongs to the SELO family. The cofactor is Mg(2+). It depends on Mn(2+) as a cofactor.

It carries out the reaction L-seryl-[protein] + ATP = 3-O-(5'-adenylyl)-L-seryl-[protein] + diphosphate. The catalysed reaction is L-threonyl-[protein] + ATP = 3-O-(5'-adenylyl)-L-threonyl-[protein] + diphosphate. The enzyme catalyses L-tyrosyl-[protein] + ATP = O-(5'-adenylyl)-L-tyrosyl-[protein] + diphosphate. It catalyses the reaction L-histidyl-[protein] + UTP = N(tele)-(5'-uridylyl)-L-histidyl-[protein] + diphosphate. It carries out the reaction L-seryl-[protein] + UTP = O-(5'-uridylyl)-L-seryl-[protein] + diphosphate. The catalysed reaction is L-tyrosyl-[protein] + UTP = O-(5'-uridylyl)-L-tyrosyl-[protein] + diphosphate. Functionally, nucleotidyltransferase involved in the post-translational modification of proteins. It can catalyze the addition of adenosine monophosphate (AMP) or uridine monophosphate (UMP) to a protein, resulting in modifications known as AMPylation and UMPylation. The chain is Protein nucleotidyltransferase YdiU from Salmonella paratyphi B (strain ATCC BAA-1250 / SPB7).